The following is a 434-amino-acid chain: Histidinol dehydrogenase (434 aa).

Residues tyrosine 130, glutamine 191, and asparagine 214 each coordinate NAD(+). The substrate site is built by serine 237, glutamine 259, and histidine 262. The Zn(2+) site is built by glutamine 259 and histidine 262. Residues glutamate 327 and histidine 328 each act as proton acceptor in the active site. Residues histidine 328, aspartate 361, glutamate 415, and histidine 420 each contribute to the substrate site. Aspartate 361 provides a ligand contact to Zn(2+). Histidine 420 lines the Zn(2+) pocket.

It belongs to the histidinol dehydrogenase family. Zn(2+) serves as cofactor.

The enzyme catalyses L-histidinol + 2 NAD(+) + H2O = L-histidine + 2 NADH + 3 H(+). The protein operates within amino-acid biosynthesis; L-histidine biosynthesis; L-histidine from 5-phospho-alpha-D-ribose 1-diphosphate: step 9/9. Catalyzes the sequential NAD-dependent oxidations of L-histidinol to L-histidinaldehyde and then to L-histidine. In Rhizobium meliloti (strain 1021) (Ensifer meliloti), this protein is Histidinol dehydrogenase.